The sequence spans 199 residues: Protein ZNRD2 (199 aa).

Alanine 2 is subject to N-acetylalanine. Cysteine 53, cysteine 56, cysteine 70, and cysteine 73 together coordinate Zn(2+). Serine 94 bears the Phosphoserine mark. Residues 100 to 125 (QLASASELPLGSRPAPQPPVPRPEHC) are disordered. A Nuclear export signal motif is present at residues 173–194 (SLETSIQLCGLIRACAEALRSL).

As to quaternary structure, homodimer. It depends on Zn(2+) as a cofactor.

Its subcellular location is the cytoplasm. Might play a role in mitosis. Antigenic molecule. Could be a centromere-associated protein. May induce anti-centromere antibodies. This is Protein ZNRD2 from Homo sapiens (Human).